The following is a 142-amino-acid chain: Nucleoside diphosphate kinase (142 aa).

The ATP site is built by Lys11, Phe59, Arg87, Thr93, Arg104, and Asn114. Residue His117 is the Pros-phosphohistidine intermediate of the active site.

It belongs to the NDK family. Homotetramer. Mg(2+) is required as a cofactor.

Its subcellular location is the cytoplasm. It catalyses the reaction a 2'-deoxyribonucleoside 5'-diphosphate + ATP = a 2'-deoxyribonucleoside 5'-triphosphate + ADP. It carries out the reaction a ribonucleoside 5'-diphosphate + ATP = a ribonucleoside 5'-triphosphate + ADP. Functionally, major role in the synthesis of nucleoside triphosphates other than ATP. The ATP gamma phosphate is transferred to the NDP beta phosphate via a ping-pong mechanism, using a phosphorylated active-site intermediate. In Photobacterium profundum (strain SS9), this protein is Nucleoside diphosphate kinase.